Here is a 306-residue protein sequence, read N- to C-terminus: Pantothenate kinase (306 aa).

Position 91–98 (91–98 (GSVAVGKS)) interacts with ATP.

Belongs to the prokaryotic pantothenate kinase family.

The protein resides in the cytoplasm. It carries out the reaction (R)-pantothenate + ATP = (R)-4'-phosphopantothenate + ADP + H(+). It functions in the pathway cofactor biosynthesis; coenzyme A biosynthesis; CoA from (R)-pantothenate: step 1/5. The polypeptide is Pantothenate kinase (Streptococcus pneumoniae (strain 70585)).